Consider the following 417-residue polypeptide: 2-oxoglutarate and iron-dependent oxygenase JMJD4 (417 aa).

The JmjC domain occupies 142 to 301 (CRDFPVEDVF…NMWRFLQQEL (160 aa)). His-189, Asp-191, and His-269 together coordinate Fe cation.

The protein belongs to the JMJD6 family. Interacts with ETF1. Interacts with the ETF1-GSPT1 complex. Requires Fe(2+) as cofactor.

The protein resides in the cytoplasm. The enzyme catalyses L-lysyl-[protein] + 2-oxoglutarate + O2 = 4-hydroxy-L-lysyl-[protein] + succinate + CO2. Catalyzes the 2-oxoglutarate and iron-dependent C4-lysyl hydroxylation of ETF1 at 'Lys-63' thereby promoting the translational termination efficiency of ETF1. The polypeptide is 2-oxoglutarate and iron-dependent oxygenase JMJD4 (JMJD4) (Homo sapiens (Human)).